The primary structure comprises 697 residues: U-box domain-containing protein 18 (697 aa).

Residues 23 to 210 (SISIVTLLDS…INRILDHVGI (188 aa)) form a U-box N-terminal domain (UND) required for EXO70B1 binding and crucial for the negative regulation of ABA-dependent stomatal movement region. One can recognise a U-box domain in the interval 287–361 (LKVEDLLCPI…RKHCKTNGIV (75 aa)). ARM repeat units lie at residues 420–459 (SFNR…NLSK), 461–500 (VTGK…YLSS), 502–544 (EDYS…GLLM), 546–587 (SDNH…KLAE), 589–631 (PDGT…NLCL), and 657–696 (NGEY…FVHA).

Interacts with EXO70B1 via its U-box N-terminal domain (UND).

Its subcellular location is the endomembrane system. The enzyme catalyses S-ubiquitinyl-[E2 ubiquitin-conjugating enzyme]-L-cysteine + [acceptor protein]-L-lysine = [E2 ubiquitin-conjugating enzyme]-L-cysteine + N(6)-ubiquitinyl-[acceptor protein]-L-lysine.. It functions in the pathway protein modification; protein ubiquitination. Its function is as follows. Functions as an E3 ubiquitin ligase. Mediates EXO70B1 ubiquitination. Involved in the regulation of abscisic acid (ABA)-mediated stomatal movements. This is U-box domain-containing protein 18 from Arabidopsis thaliana (Mouse-ear cress).